A 158-amino-acid chain; its full sequence is Cytochrome c2 (158 aa).

Pyrrolidone carboxylic acid is present on Q1. 4 residues coordinate heme c: C18, C21, H22, and M102. The segment at A129–T158 is disordered.

It belongs to the cytochrome c family. In terms of processing, binds 1 heme c group covalently per subunit.

It localises to the periplasm. Its function is as follows. Cytochrome c2 is found mainly in purple, non-sulfur, photosynthetic bacteria where it functions as the electron donor to the oxidized bacteriochlorophyll in the photophosphorylation pathway. However, it may also have a role in the respiratory chain and is found in some non-photosynthetic bacteria. The protein is Cytochrome c2 of Fuscovulum blasticum (Rhodobacter blasticus).